We begin with the raw amino-acid sequence, 101 residues long: Small ribosomal subunit protein bS16 (101 aa).

The protein belongs to the bacterial ribosomal protein bS16 family.

The chain is Small ribosomal subunit protein bS16 from Ureaplasma parvum serovar 3 (strain ATCC 700970).